Reading from the N-terminus, the 315-residue chain is Glycine--tRNA ligase alpha subunit (315 aa).

The protein belongs to the class-II aminoacyl-tRNA synthetase family. In terms of assembly, tetramer of two alpha and two beta subunits.

The protein resides in the cytoplasm. The catalysed reaction is tRNA(Gly) + glycine + ATP = glycyl-tRNA(Gly) + AMP + diphosphate. This chain is Glycine--tRNA ligase alpha subunit, found in Pseudomonas putida (strain W619).